The following is a 193-amino-acid chain: dCTP deaminase (193 aa).

DCTP contacts are provided by residues 110–115, Asp128, 136–138, Tyr171, Lys178, and Gln182; these read RSSLAR and VLE. The active-site Proton donor/acceptor is Glu138.

It belongs to the dCTP deaminase family. As to quaternary structure, homotrimer.

It carries out the reaction dCTP + H2O + H(+) = dUTP + NH4(+). Its pathway is pyrimidine metabolism; dUMP biosynthesis; dUMP from dCTP (dUTP route): step 1/2. In terms of biological role, catalyzes the deamination of dCTP to dUTP. The chain is dCTP deaminase from Buchnera aphidicola subsp. Schizaphis graminum (strain Sg).